A 356-amino-acid polypeptide reads, in one-letter code: S-adenosylmethionine:tRNA ribosyltransferase-isomerase (356 aa).

The protein belongs to the QueA family. As to quaternary structure, monomer.

The protein resides in the cytoplasm. It carries out the reaction 7-aminomethyl-7-carbaguanosine(34) in tRNA + S-adenosyl-L-methionine = epoxyqueuosine(34) in tRNA + adenine + L-methionine + 2 H(+). Its pathway is tRNA modification; tRNA-queuosine biosynthesis. Transfers and isomerizes the ribose moiety from AdoMet to the 7-aminomethyl group of 7-deazaguanine (preQ1-tRNA) to give epoxyqueuosine (oQ-tRNA). In Xanthomonas axonopodis pv. citri (strain 306), this protein is S-adenosylmethionine:tRNA ribosyltransferase-isomerase.